The following is a 147-amino-acid chain: Deoxyuridine 5'-triphosphate nucleotidohydrolase (147 aa).

Arginine 24 serves as a coordination point for Mg(2+). DUTP is bound by residues 68–70 (PRS), 82–85 (GVID), tyrosine 88, glycine 93, isoleucine 95, and arginine 111.

Belongs to the dUTPase family. The cofactor is Mg(2+).

It carries out the reaction dUTP + H2O = dUMP + diphosphate + H(+). In terms of biological role, this enzyme is involved in nucleotide metabolism: it produces dUMP, the immediate precursor of thymidine nucleotides and it decreases the intracellular concentration of dUTP so that uracil cannot be incorporated into DNA. In Homo sapiens (Human), this protein is Deoxyuridine 5'-triphosphate nucleotidohydrolase (OPG046).